The chain runs to 664 residues: Cyclic nucleotide-gated channel alpha-2 (664 aa).

The segment covering 1-10 (MMTEKSNGVK) has biased composition (polar residues). The segment at 1–51 (MMTEKSNGVKSSPANNHNHHPPPSIKANGKDDHRAGSRPQSVAADDDTSPE) is disordered. Over 1-146 (MMTEKSNGVK…PAGDWYYRWL (146 aa)) the chain is Cytoplasmic. Residues 147 to 168 (FVIAMPVLYNWCLLVARACFSD) traverse the membrane as a helical segment. Residues 169–178 (LQRNYFVVWL) lie on the Extracellular side of the membrane. Residues 179–199 (VLDYFSDTVYIADLIIRLRTG) form a helical membrane-spanning segment. The Cytoplasmic portion of the chain corresponds to 200–224 (FLEQGLLVKDPKKLRDNYIHTLQFK). Residues 225–243 (LDVASIIPTDLIYFAVGIH) traverse the membrane as a helical segment. Residues 244–248 (SPEVR) are Extracellular-facing. A helical membrane pass occupies residues 249-267 (FNRLLHFARMFEFFDRTET). Residues 268–274 (RTSYPNI) lie on the Cytoplasmic side of the membrane. The segment at 272 to 380 (PNIFRISNLV…GNVGSMISNM (109 aa)) is ion conduction pathway. Residues 275–298 (FRISNLVLYILVIIHWNACIYYVI) form a helical membrane-spanning segment. At 299 to 321 (SKSIGFGVDTWVYPNITDPEYGY) the chain is on the extracellular side. 2 consecutive transmembrane segments (helical) span residues 322-356 (LAREYIYCLYWSTLTLTTIGETPPPVKDEEYLFVI) and 357-381 (FDFLIGVLIFATIVGNVGSMISNMN). Residues 339 to 342 (TIGE) form a selectivity filter region. A C-linker region spans residues 382-458 (ATRAEFQAKI…STLKKVRIFQ (77 aa)). Over 382–664 (ATRAEFQAKI…INTPEPTAAE (283 aa)) the chain is Cytoplasmic. A cyclic nucleotide-binding domain region spans residues 462–582 (AGLLVELVLK…EERGREILMK (121 aa)). Residues Gly-522, Ser-525, Arg-538, and Thr-539 each coordinate 3',5'-cyclic GMP. 3',5'-cyclic AMP is bound by residues Arg-538 and Thr-539. Residues 599–653 (VQEKLEQLETNMDTLYTRFARLLAEYTGAQQKLKQRITVLETKMKQNHEDDYLSD) are a coiled coil.

This sequence belongs to the cyclic nucleotide-gated cation channel (TC 1.A.1.5) family. CNGA2 subfamily. As to quaternary structure, the olfactory cyclic nucleotide-gated channel is an heterotetramer composed of CNGA2, CNGA4 and CNGB1b subunits with 2:1:1 stoichiometry. Olfactory neurons. Widely expressed in brain, enriched in deep cerebellar nuclei, olfactory bulb mitral cells and cerebellar Purkinje neurons. Expressed in olfactory sensory cilia (at protein level).

Its subcellular location is the cell projection. It localises to the cilium membrane. The catalysed reaction is Ca(2+)(in) = Ca(2+)(out). It catalyses the reaction Na(+)(in) = Na(+)(out). The enzyme catalyses K(+)(in) = K(+)(out). It carries out the reaction NH4(+)(in) = NH4(+)(out). The catalysed reaction is Rb(+)(in) = Rb(+)(out). It catalyses the reaction Li(+)(in) = Li(+)(out). The enzyme catalyses Cs(+)(in) = Cs(+)(out). Its activity is regulated as follows. The channel activity is inhibited by L-cis diltiazem. Pore-forming subunit of the olfactory cyclic nucleotide-gated channel. Operates in the cilia of olfactory sensory neurons where chemical stimulation of the odorant is converted to an electrical signal. Mediates odorant-induced cAMP-dependent Ca(2+) influx triggering neuron depolarization. The rise of intracellular Ca(2+) levels potentiates the olfactory response by activating Ca(2+)-dependent Cl(-) channels, but it also serves as a negative feedback signal to desensitize the channel for rapid adaptation to odorants. Conducts cAMP- and cGMP-gated ion currents, with permeability for monovalent and divalent cations. This chain is Cyclic nucleotide-gated channel alpha-2, found in Rattus norvegicus (Rat).